The sequence spans 606 residues: Scavenger receptor class A member 3 (606 aa).

Topologically, residues Met-1 to Arg-56 are cytoplasmic. Residues Ile-57–Phe-77 form a helical; Signal-anchor for type II membrane protein membrane-spanning segment. Residues Arg-78–Tyr-606 are Extracellular-facing. Residues Asn-115, Asn-182, Asn-224, Asn-257, Asn-313, Asn-337, Asn-365, Asn-400, Asn-430, and Asn-451 are each glycosylated (N-linked (GlcNAc...) asparagine). The tract at residues Ile-455–Tyr-606 is disordered. 2 consecutive Collagen-like domains span residues Arg-456–Ser-558 and Gly-559–Gly-601. The span at Pro-497 to Arg-516 shows a compositional bias: low complexity. Over residues Gly-526–Gly-535 the composition is skewed to gly residues. 2 stretches are compositionally biased toward pro residues: residues Pro-548–Ser-558 and Pro-591–Tyr-606.

The protein localises to the endoplasmic reticulum membrane. Its subcellular location is the golgi apparatus membrane. Its function is as follows. Seems to protect cells by scavenging oxidative molecules or harmful products of oxidation. This is Scavenger receptor class A member 3 (Scara3) from Mus musculus (Mouse).